The following is a 236-amino-acid chain: Probable glutathione S-transferase BZ2 (236 aa).

Residues 1 to 80 (MRVLGGEVSP…YIEDVARESG (80 aa)) enclose the GST N-terminal domain. Residues S9, K37, I51, and 64–65 (ES) contribute to the glutathione site. Positions 92–221 (DPYERAMHRF…LPDTEKVVQF (130 aa)) constitute a GST C-terminal domain.

This sequence belongs to the GST superfamily. HSP26 family.

The enzyme catalyses RX + glutathione = an S-substituted glutathione + a halide anion + H(+). Its pathway is pigment biosynthesis; anthocyanin biosynthesis. The protein is Probable glutathione S-transferase BZ2 (BZ2) of Zea mays (Maize).